Here is a 325-residue protein sequence, read N- to C-terminus: Heat-inducible transcription repressor HrcA (325 aa).

This sequence belongs to the HrcA family.

Functionally, negative regulator of class I heat shock genes (grpE-dnaK-dnaJ and groELS operons). Prevents heat-shock induction of these operons. In Staphylococcus aureus (strain JH1), this protein is Heat-inducible transcription repressor HrcA.